The chain runs to 129 residues: Lysozyme C (129 aa).

The 129-residue stretch at 1 to 129 (KVYGRCELAA…VHAWIRGCRL (129 aa)) folds into the C-type lysozyme domain. 4 cysteine pairs are disulfide-bonded: cysteine 6–cysteine 127, cysteine 30–cysteine 115, cysteine 64–cysteine 80, and cysteine 76–cysteine 94. Residues glutamate 35 and aspartate 52 contribute to the active site.

This sequence belongs to the glycosyl hydrolase 22 family. As to quaternary structure, monomer.

The protein resides in the secreted. The catalysed reaction is Hydrolysis of (1-&gt;4)-beta-linkages between N-acetylmuramic acid and N-acetyl-D-glucosamine residues in a peptidoglycan and between N-acetyl-D-glucosamine residues in chitodextrins.. Functionally, lysozymes have primarily a bacteriolytic function; those in tissues and body fluids are associated with the monocyte-macrophage system and enhance the activity of immunoagents. In Pavo cristatus (Indian peafowl), this protein is Lysozyme C (LYZ).